We begin with the raw amino-acid sequence, 520 residues long: Hydroxymethylglutaryl-CoA synthase, cytoplasmic (520 aa).

Serine 4 is modified (phosphoserine). Residues aspartate 43 and alanine 44 each contribute to the (3S)-3-hydroxy-3-methylglutaryl-CoA site. 44–46 (AGK) provides a ligand contact to CoA. Lysine 46 bears the N6-acetyllysine mark. Glutamate 95 (proton donor/acceptor) is an active-site residue. Positions 129, 167, 171, 221, and 264 each coordinate (3S)-3-hydroxy-3-methylglutaryl-CoA. Cysteine 129 serves as the catalytic Acyl-thioester intermediate. Asparagine 167 lines the CoA pocket. Serine 221 serves as a coordination point for CoA. The Proton donor/acceptor role is filled by histidine 264. Lysine 269 and lysine 273 together coordinate CoA. Residues lysine 273, asparagine 343, and serine 377 each contribute to the (3S)-3-hydroxy-3-methylglutaryl-CoA site. Lysine 273 carries the post-translational modification N6-acetyllysine. The interval 487–520 (NTATEHIPSPAKKVPRLPATSGEPESAVISNGEH) is disordered. 2 positions are modified to phosphoserine: serine 495 and serine 516.

It belongs to the thiolase-like superfamily. HMG-CoA synthase family. In terms of assembly, homodimer.

The protein localises to the cytoplasm. It carries out the reaction acetoacetyl-CoA + acetyl-CoA + H2O = (3S)-3-hydroxy-3-methylglutaryl-CoA + CoA + H(+). The protein operates within metabolic intermediate biosynthesis; (R)-mevalonate biosynthesis; (R)-mevalonate from acetyl-CoA: step 2/3. In terms of biological role, catalyzes the condensation of acetyl-CoA with acetoacetyl-CoA to form HMG-CoA, which is converted by HMG-CoA reductase (HMGCR) into mevalonate, a precursor for cholesterol synthesis. The sequence is that of Hydroxymethylglutaryl-CoA synthase, cytoplasmic from Rattus norvegicus (Rat).